Reading from the N-terminus, the 39-residue chain is Protein MchX (39 aa).

A helical membrane pass occupies residues 15–37; sequence SALSSTLLLSLIMSATLLEYSLS.

Its subcellular location is the cell inner membrane. Functionally, required for microcin H47 production. Possibly involved in a regulatory loop modulating its own expression and that of MchI and MchB. The polypeptide is Protein MchX (mchX) (Escherichia coli).